A 266-amino-acid chain; its full sequence is MAKMTTLKMKERLEKELKAPNRQFAYNRDNDTLSITQDGKKVTLTIPQIIANYENDGDEAIEKIIYYVEEGFQAASGKVELRNNQSNIYPVVRATSFPVETKTGERLLADEHTAETKIFYAFDLGKSYRFIEESMLEKENITREQIREFAFQNLAKLDIPLKKDSVNGNDFYFVRTNDGYDASRLLNVNFLRDMREKLTGEMVLAVPHQDVLIIGDIQDNTGYDVLAHMTMDFFADGLVPITSLPFVYNNGKLEPIFIMAKNRLKE.

This sequence belongs to the UPF0354 family.

This is UPF0354 protein lwe1624 from Listeria welshimeri serovar 6b (strain ATCC 35897 / DSM 20650 / CCUG 15529 / CIP 8149 / NCTC 11857 / SLCC 5334 / V8).